We begin with the raw amino-acid sequence, 784 residues long: Probable phosphoketolase (784 aa).

The protein belongs to the XFP family. It depends on thiamine diphosphate as a cofactor.

In Rhodopseudomonas palustris (strain BisB5), this protein is Probable phosphoketolase.